Consider the following 297-residue polypeptide: Small ribosomal subunit protein uS2 (297 aa).

A compositionally biased stretch (low complexity) spans 263 to 289; that stretch reads AAPTSWEADGGDWAASSAAPAGESWAE. The segment at 263 to 297 is disordered; that stretch reads AAPTSWEADGGDWAASSAAPAGESWAETQPAEAKW.

It belongs to the universal ribosomal protein uS2 family. Component of the small ribosomal subunit. Mature ribosomes consist of a small (40S) and a large (60S) subunit. The 40S subunit contains about 33 different proteins and 1 molecule of RNA (18S). The 60S subunit contains about 49 different proteins and 3 molecules of RNA (25S, 5.8S and 5S). Interacts with rps21.

The protein resides in the cytoplasm. Functionally, required for the assembly and/or stability of the 40S ribosomal subunit. Required for the processing of the 20S rRNA-precursor to mature 18S rRNA in a late step of the maturation of 40S ribosomal subunits. This chain is Small ribosomal subunit protein uS2 (rps0), found in Neosartorya fischeri (strain ATCC 1020 / DSM 3700 / CBS 544.65 / FGSC A1164 / JCM 1740 / NRRL 181 / WB 181) (Aspergillus fischerianus).